We begin with the raw amino-acid sequence, 509 residues long: 2-succinyl-5-enolpyruvyl-6-hydroxy-3-cyclohexene-1-carboxylate synthase (509 aa).

The protein belongs to the TPP enzyme family. MenD subfamily. Homodimer. Requires Mg(2+) as cofactor. Mn(2+) is required as a cofactor. The cofactor is thiamine diphosphate.

The enzyme catalyses isochorismate + 2-oxoglutarate + H(+) = 5-enolpyruvoyl-6-hydroxy-2-succinyl-cyclohex-3-ene-1-carboxylate + CO2. The protein operates within quinol/quinone metabolism; 1,4-dihydroxy-2-naphthoate biosynthesis; 1,4-dihydroxy-2-naphthoate from chorismate: step 2/7. It participates in quinol/quinone metabolism; menaquinone biosynthesis. Its function is as follows. Catalyzes the thiamine diphosphate-dependent decarboxylation of 2-oxoglutarate and the subsequent addition of the resulting succinic semialdehyde-thiamine pyrophosphate anion to isochorismate to yield 2-succinyl-5-enolpyruvyl-6-hydroxy-3-cyclohexene-1-carboxylate (SEPHCHC). The protein is 2-succinyl-5-enolpyruvyl-6-hydroxy-3-cyclohexene-1-carboxylate synthase of Corynebacterium diphtheriae (strain ATCC 700971 / NCTC 13129 / Biotype gravis).